The primary structure comprises 547 residues: ATP synthase subunit alpha (547 aa).

172–179 is a binding site for ATP; it reads GDRKTGKT.

The protein belongs to the ATPase alpha/beta chains family. As to quaternary structure, F-type ATPases have 2 components, CF(1) - the catalytic core - and CF(0) - the membrane proton channel. CF(1) has five subunits: alpha(3), beta(3), gamma(1), delta(1), epsilon(1). CF(0) has three main subunits: a(1), b(2) and c(9-12). The alpha and beta chains form an alternating ring which encloses part of the gamma chain. CF(1) is attached to CF(0) by a central stalk formed by the gamma and epsilon chains, while a peripheral stalk is formed by the delta and b chains.

The protein resides in the cell membrane. It carries out the reaction ATP + H2O + 4 H(+)(in) = ADP + phosphate + 5 H(+)(out). In terms of biological role, produces ATP from ADP in the presence of a proton gradient across the membrane. The alpha chain is a regulatory subunit. This Rhodococcus erythropolis (strain PR4 / NBRC 100887) protein is ATP synthase subunit alpha.